Consider the following 269-residue polypeptide: Imidazoleglycerol-phosphate dehydratase 2, chloroplastic (269 aa).

Residues 1–51 (MTTAPFLFPSLSRLHSARASSFPKPPVGSGAGVAFPARPYGSSLRLRSSVM) constitute a chloroplast transit peptide. Substrate contacts are provided by residues glutamate 83, 109–117 (HMLDQLASH), 135–139 (HHSNE), arginine 161, and arginine 183. Histidine 109, histidine 135, histidine 136, and glutamate 139 together coordinate Mn(2+). 4 residues coordinate Mn(2+): histidine 207, histidine 231, histidine 232, and glutamate 235. Substrate-binding positions include 231–239 (HHIIEATFK) and 261–263 (SSK).

The protein belongs to the imidazoleglycerol-phosphate dehydratase family. The cofactor is Mn(2+).

Its subcellular location is the plastid. The protein localises to the chloroplast. It catalyses the reaction D-erythro-1-(imidazol-4-yl)glycerol 3-phosphate = 3-(imidazol-4-yl)-2-oxopropyl phosphate + H2O. The protein operates within amino-acid biosynthesis; L-histidine biosynthesis; L-histidine from 5-phospho-alpha-D-ribose 1-diphosphate: step 6/9. The chain is Imidazoleglycerol-phosphate dehydratase 2, chloroplastic from Triticum aestivum (Wheat).